Reading from the N-terminus, the 213-residue chain is MLCCIRRTKPVEKNEEADQEIKQDGTKPEENAHKAATKIQASFRGHITRKKMKDEDKDGENDTAPDESAETEEKEERVSPSEEKPVEVSTETAEESKPAEQPNSPAAEAPPTAATDSAPSDTPTKEEAQEQLQDAEEPKETENTAAADDITTQKEEEKEEEEEEEEEEEEAKRADVPDDTPAATESQETDQTDKKEALDDSKPAEEAGKDQNV.

Positions 1–213 (MLCCIRRTKP…AEEAGKDQNV (213 aa)) are disordered. 2 S-palmitoyl cysteine lipidation sites follow: Cys-3 and Cys-4. The segment covering 9 to 33 (KPVEKNEEADQEIKQDGTKPEENAH) has biased composition (basic and acidic residues). The IQ domain maps to 32–61 (AHKAATKIQASFRGHITRKKMKDEDKDGEN). Over residues 57–73 (KDGENDTAPDESAETEE) the composition is skewed to acidic residues. The span at 74–86 (KEERVSPSEEKPV) shows a compositional bias: basic and acidic residues. Positions 102-122 (PNSPAAEAPPTAATDSAPSDT) are enriched in low complexity. Acidic residues predominate over residues 157-169 (EKEEEEEEEEEEE). Residues 191 to 213 (QTDKKEALDDSKPAEEAGKDQNV) are compositionally biased toward basic and acidic residues.

This sequence belongs to the neuromodulin family. Binds calmodulin with a greater affinity in the absence of Ca(2+) than in its presence. In terms of processing, palmitoylated. Palmitoylation is essential for plasma membrane association.

The protein resides in the cell membrane. It localises to the cell projection. It is found in the growth cone membrane. The protein localises to the synapse. Its subcellular location is the filopodium membrane. This protein is associated with nerve growth. It is a major component of the motile 'growth cones' that form the tips of elongating axons. Plays a role in axonal and dendritic filopodia induction. This chain is Neuromodulin (gap43), found in Carassius auratus (Goldfish).